The following is a 418-amino-acid chain: Gamma-glutamyl phosphate reductase (418 aa).

It belongs to the gamma-glutamyl phosphate reductase family.

It is found in the cytoplasm. The catalysed reaction is L-glutamate 5-semialdehyde + phosphate + NADP(+) = L-glutamyl 5-phosphate + NADPH + H(+). It participates in amino-acid biosynthesis; L-proline biosynthesis; L-glutamate 5-semialdehyde from L-glutamate: step 2/2. Its function is as follows. Catalyzes the NADPH-dependent reduction of L-glutamate 5-phosphate into L-glutamate 5-semialdehyde and phosphate. The product spontaneously undergoes cyclization to form 1-pyrroline-5-carboxylate. This is Gamma-glutamyl phosphate reductase from Geotalea uraniireducens (strain Rf4) (Geobacter uraniireducens).